Reading from the N-terminus, the 927-residue chain is MASFLEKVLRTGDKRVLKRLRTYADAVNSLEDSFKELSDAELRAETDAFRERIADGESLDRLLPEAFAAVREAASRTLGQRHFDVQIMGGAALHLGYIAEMKTGEGKTLVATAPAYLNALAGKGVHVVTVNDYLAEYQANLMGRVYRFLGLETGVILGGQEPAVRREQYAADITYGTNNEFGFDYLRDNMAWTEDELVQRGHNFAIVDEVDSILIDEARTPLIISGPASGEANRWYREFATVVQKLSPETDYEVDEKKRTVGVLEPGIEKVEDWLGIDNLYESRNTPLIGFLNNAIKAKELFRNNKDYIVAGGEVKIVDEHTGRVLAGRRYNEGVHQAIEAKEGVEIKPENQTMATITLQNYFRLYDKLSGMTGTAQTEAAEFMNTYEIGVVAIPPHRGIAREDKRDVVYKNEATKYAAVVRDIEERHEKGQPVLVGTASVEKSEYLSRLLAKRGVRHEVLNAKNHAREAAIVAQAGRKGAVTVATNMAGRGTDIMLGGNAEFNAVDRMAELGLDPERDAEEYEARWPEVLKACEEATRSEHEEVLEAGGLYVLGTERHESRRIDNQLRGRSGRQGDPGESRFYLSLSDDLMRLFNPGAAQRLMAIAPDDVPVTGRLITSGIANAQNQVEGRNAEQRKNVLKYDDVLNRQREVIYKDRKRILMGDDIEDQIRQFTEEVLSSTIAERTGKGHPEDWDLDGLWEALRAVYPVSLTPDEVVEEAGGRPRLTSDFLQEQILSDATVMYLEREEELGSEAMRNLERRVLLSVIGQRWPEHLYEMDYLKEGIGLRAMAQRDPLVEYQREGHAMFQDMMAAIREQTVVTLFNLEVRKQRTGAAGGAVELSAPQRPAFLQYTAPDEDGTPHAEVEAVDPGARERTSEDGTPTDASAGTDPAASSDRPEGETGGNRAKRRGASARSGSKAKRGKRR.

Residues Q86, 104–108 (GEGKT), and D494 contribute to the ATP site. Residues 853–927 (YTAPDEDGTP…GSKAKRGKRR (75 aa)) are disordered. Basic and acidic residues predominate over residues 860–879 (GTPHAEVEAVDPGARERTSE). Over residues 907–927 (RAKRRGASARSGSKAKRGKRR) the composition is skewed to basic residues.

The protein belongs to the SecA family. In terms of assembly, monomer and homodimer. Part of the essential Sec protein translocation apparatus which comprises SecA, SecYEG and auxiliary proteins SecDF. Other proteins may also be involved.

The protein resides in the cell membrane. It is found in the cytoplasm. The catalysed reaction is ATP + H2O + cellular proteinSide 1 = ADP + phosphate + cellular proteinSide 2.. Functionally, part of the Sec protein translocase complex. Interacts with the SecYEG preprotein conducting channel. Has a central role in coupling the hydrolysis of ATP to the transfer of proteins into and across the cell membrane, serving as an ATP-driven molecular motor driving the stepwise translocation of polypeptide chains across the membrane. The polypeptide is Protein translocase subunit SecA (Kocuria rhizophila (strain ATCC 9341 / DSM 348 / NBRC 103217 / DC2201)).